Reading from the N-terminus, the 398-residue chain is Phospholipase C (398 aa).

Positions 1 to 26 (MKALKKVSNILCVLGLCTLMGGTSYA) are cleaved as a signal peptide. Positions 27, 37, 82, 94, 152, 156, 162, 174, and 178 each coordinate Zn(2+). The Zn-dependent PLC domain occupies 27-276 (WDGKKDGTGT…NEVSNGNTGD (250 aa)). Positions 273–281 (NTGDNDSLT) are linker. The PLAT domain maps to 282–398 (NEFNIVLKTA…TGNETYYINK (117 aa)). Residues G297, T298, D299, D319, N320, G322, N323, D324, and D363 each contribute to the Ca(2+) site.

The protein belongs to the bacterial zinc-metallophospholipase C family. The cofactor is Ca(2+). Zn(2+) serves as cofactor.

It localises to the secreted. It carries out the reaction a 1,2-diacyl-sn-glycero-3-phosphocholine + H2O = phosphocholine + a 1,2-diacyl-sn-glycerol + H(+). In terms of biological role, bacterial hemolysins are exotoxins that attack blood cell membranes and cause cell rupture. Binds to eukaryotic membranes where it hydrolyzes phosphatidylcholine. This enzyme has 10-fold less activity towards sphingomyelin than its C.perfringens counterpart, is approximately 100-fold less hemolytic against mouse erythrocytes and at least 100-fold less toxic in mice. The protein is Phospholipase C (plc) of Paraclostridium bifermentans (Clostridium bifermentans).